A 383-amino-acid polypeptide reads, in one-letter code: Succinyl-diaminopimelate desuccinylase (383 aa).

H74 is a Zn(2+) binding site. The active site involves D76. D107 lines the Zn(2+) pocket. The active-site Proton acceptor is E141. E142, E170, and H356 together coordinate Zn(2+).

Belongs to the peptidase M20A family. DapE subfamily. In terms of assembly, homodimer. Zn(2+) serves as cofactor. The cofactor is Co(2+).

It catalyses the reaction N-succinyl-(2S,6S)-2,6-diaminopimelate + H2O = (2S,6S)-2,6-diaminopimelate + succinate. The protein operates within amino-acid biosynthesis; L-lysine biosynthesis via DAP pathway; LL-2,6-diaminopimelate from (S)-tetrahydrodipicolinate (succinylase route): step 3/3. Its function is as follows. Catalyzes the hydrolysis of N-succinyl-L,L-diaminopimelic acid (SDAP), forming succinate and LL-2,6-diaminopimelate (DAP), an intermediate involved in the bacterial biosynthesis of lysine and meso-diaminopimelic acid, an essential component of bacterial cell walls. This chain is Succinyl-diaminopimelate desuccinylase, found in Ralstonia nicotianae (strain ATCC BAA-1114 / GMI1000) (Ralstonia solanacearum).